The chain runs to 454 residues: Phosphoglucosamine mutase (454 aa).

Ser101 (phosphoserine intermediate) is an active-site residue. Residues Ser101, Asp243, Asp245, and Asp247 each contribute to the Mg(2+) site. At Ser101 the chain carries Phosphoserine.

Belongs to the phosphohexose mutase family. Requires Mg(2+) as cofactor. Post-translationally, activated by phosphorylation.

The catalysed reaction is alpha-D-glucosamine 1-phosphate = D-glucosamine 6-phosphate. Catalyzes the conversion of glucosamine-6-phosphate to glucosamine-1-phosphate. In Geotalea uraniireducens (strain Rf4) (Geobacter uraniireducens), this protein is Phosphoglucosamine mutase.